A 456-amino-acid chain; its full sequence is MSSDTNLSNPPKVGFVSLGCPKALVDSEQIITQLRAEGYSISGTYDGADLVVVNTCGFIDEAVQESLDAIGEALTENGKVIVTGCLGAKKDAAGHDIVSAVHPKVLAVTGPHALGEVMQAVHTHLPKPHDPFTDLVPAAGIKLTPKHYAYLKISEGCNHRCSFCIIPSMRGDLVSRPVAEVMLEAENLFKAGVKELLVISQDTSAYGVDVKYRTGFWNGRPLKTRMTELVAALGELASQYGAWVRLHYVYPYPHVDEIIPLMNQGNVLPYLDVPLQHAHPDVLKRMKRPANAEKTLDRIRAWREVCPDLTIRSTFIAGFPGETEEEFQTLLDFIAEAELDRVGCFAYSPVEGATANDLPGALPDEVREERRARFMEVAEEVSARRLQRKVGQTLRVLVDEVNQDGGIGRSSADAPEIDGLVYIDPAAKASQRYKTGDFVNVKITGADGHDLWGEVA.

Positions 11-126 (PKVGFVSLGC…VMQAVHTHLP (116 aa)) constitute an MTTase N-terminal domain. 6 residues coordinate [4Fe-4S] cluster: Cys-20, Cys-56, Cys-85, Cys-157, Cys-161, and Cys-164. One can recognise a Radical SAM core domain in the interval 143–384 (LTPKHYAYLK…MEVAEEVSAR (242 aa)). The region spanning 387–456 (QRKVGQTLRV…DGHDLWGEVA (70 aa)) is the TRAM domain.

The protein belongs to the methylthiotransferase family. RimO subfamily. It depends on [4Fe-4S] cluster as a cofactor.

The protein resides in the cytoplasm. The enzyme catalyses L-aspartate(89)-[ribosomal protein uS12]-hydrogen + (sulfur carrier)-SH + AH2 + 2 S-adenosyl-L-methionine = 3-methylsulfanyl-L-aspartate(89)-[ribosomal protein uS12]-hydrogen + (sulfur carrier)-H + 5'-deoxyadenosine + L-methionine + A + S-adenosyl-L-homocysteine + 2 H(+). Catalyzes the methylthiolation of an aspartic acid residue of ribosomal protein uS12. In Cupriavidus metallidurans (strain ATCC 43123 / DSM 2839 / NBRC 102507 / CH34) (Ralstonia metallidurans), this protein is Ribosomal protein uS12 methylthiotransferase RimO.